A 167-amino-acid chain; its full sequence is MNRPAPVEISYENMRFLITHNPTNATLNKFTEELKKYGVTTLVRVCDATYDKAPVEKEGIHVLDWPFDDGAPPPNQIVDDWLNLLKTKFREEPGCCVAVHCVAGLGRAPVLVALALIECGMKYEDAVQFIRQKRRGAFNSKQLLYLEKYRPKMRLRFRDTNGHCCVQ.

The Tyrosine-protein phosphatase domain maps to 5 to 158; the sequence is APVEISYENM…YRPKMRLRFR (154 aa). An intrachain disulfide couples Cys-46 to Cys-101. The active-site Proton donor is the Asp-69. Cys-101 acts as the Phosphocysteine intermediate in catalysis. 102 to 107 is a binding site for phosphate; that stretch reads VAGLGR. Residue Arg-107 participates in substrate binding. Cys-164 carries the cysteine methyl ester modification. Residue Cys-164 is the site of S-farnesyl cysteine attachment. Residues 165-167 constitute a propeptide, removed in mature form; it reads CVQ.

The protein belongs to the protein-tyrosine phosphatase family. In terms of assembly, in contrast to PTP4A1 and PTP4A3, does not interact with tubulin. Interacts with RABGGTB. Farnesylated. Farnesylation is required for membrane targeting and for interaction with RABGGTB. As to expression, expressed in skeletal muscle, and at lower levels in liver, lung, heart, kidney, brain, testis and spleen.

It localises to the cell membrane. It is found in the early endosome. Its subcellular location is the cytoplasm. The catalysed reaction is O-phospho-L-tyrosyl-[protein] + H2O = L-tyrosyl-[protein] + phosphate. Its activity is regulated as follows. Inhibited by sodium orthovanadate and pentamidine. Functionally, protein tyrosine phosphatase which stimulates progression from G1 into S phase during mitosis. Inhibits geranylgeranyl transferase type II activity by blocking the association between RABGGTA and RABGGTB. The polypeptide is Protein tyrosine phosphatase type IVA 2 (Ptp4a2) (Mus musculus (Mouse)).